The primary structure comprises 140 residues: Cytochrome c-type biogenesis protein CcmE (140 aa).

Over 1-7 (MTKRQNR) the chain is Cytoplasmic. The chain crosses the membrane as a helical; Signal-anchor for type II membrane protein span at residues 8–28 (MVLVALLVIGVSLAGYLGLKA). At 29 to 140 (FNENLLYFLS…DALEKAKNKQ (112 aa)) the chain is on the periplasmic side. Positions 120 and 124 each coordinate heme.

Belongs to the CcmE/CycJ family.

Its subcellular location is the cell inner membrane. Heme chaperone required for the biogenesis of c-type cytochromes. Transiently binds heme delivered by CcmC and transfers the heme to apo-cytochromes in a process facilitated by CcmF and CcmH. The protein is Cytochrome c-type biogenesis protein CcmE of Vesicomyosocius okutanii subsp. Calyptogena okutanii (strain HA).